A 224-amino-acid polypeptide reads, in one-letter code: DeSI-like protein At4g17486 (224 aa).

The PPPDE domain maps to 26 to 163; it reads TPVYLNVYDL…FCNCLLPESI (138 aa). Catalysis depends on residues His51 and Cys125. Residues 176–201 are disordered; that stretch reads EFSDEDESNSEASSVSDEEGSEQHLI.

This sequence belongs to the DeSI family.

The sequence is that of DeSI-like protein At4g17486 from Arabidopsis thaliana (Mouse-ear cress).